The chain runs to 104 residues: Turripeptide OL55-like (104 aa).

In terms of processing, contains 8 disulfide bonds. As to expression, expressed by the venom duct.

It is found in the secreted. Functionally, acts as a neurotoxin by inhibiting an ion channel. The chain is Turripeptide OL55-like from Iotyrris cingulifera (Sea snail).